Consider the following 253-residue polypeptide: Adenosylcobinamide-GDP ribazoletransferase (253 aa).

Transmembrane regions (helical) follow at residues 33–53 (ISPL…YVLL), 106–126 (IGSG…VALL), 132–152 (FYTI…GLYI), and 178–198 (VLLL…FLVF).

This sequence belongs to the CobS family. It depends on Mg(2+) as a cofactor.

It is found in the cell membrane. It carries out the reaction alpha-ribazole + adenosylcob(III)inamide-GDP = adenosylcob(III)alamin + GMP + H(+). The enzyme catalyses alpha-ribazole 5'-phosphate + adenosylcob(III)inamide-GDP = adenosylcob(III)alamin 5'-phosphate + GMP + H(+). It functions in the pathway cofactor biosynthesis; adenosylcobalamin biosynthesis; adenosylcobalamin from cob(II)yrinate a,c-diamide: step 7/7. Functionally, joins adenosylcobinamide-GDP and alpha-ribazole to generate adenosylcobalamin (Ado-cobalamin). Also synthesizes adenosylcobalamin 5'-phosphate from adenosylcobinamide-GDP and alpha-ribazole 5'-phosphate. The chain is Adenosylcobinamide-GDP ribazoletransferase from Saccharolobus islandicus (strain Y.G.57.14 / Yellowstone #1) (Sulfolobus islandicus).